The sequence spans 237 residues: Cysteine-rich venom protein DIS1 (237 aa).

The N-terminal stretch at 1–18 (MFVFILLSLAAVLQQSFG) is a signal peptide. The SCP domain occupies 37-165 (VDKHNAFRRS…SYNYFYVCQY (129 aa)). Disulfide bonds link Cys74-Cys152, Cys91-Cys166, Cys147-Cys163, Cys185-Cys192, Cys188-Cys197, Cys201-Cys234, and Cys219-Cys232. Residues 201-234 (CSREDVFMNCKSLVAQSNCQDDYIRKNCPATCFC) enclose the ShKT domain.

It belongs to the CRISP family. In terms of tissue distribution, expressed by the venom gland.

The protein localises to the secreted. Its function is as follows. Weakly blocks contraction of smooth muscle elicited by high potassium-induced depolarization, but does not block caffeine-stimulated contraction. May target voltage-gated calcium channels on smooth muscle. The protein is Cysteine-rich venom protein DIS1 of Dispholidus typus (Boomslang).